The sequence spans 242 residues: Spiralin (242 aa).

Residues methionine 1–alanine 23 form the signal peptide. The N-palmitoyl cysteine moiety is linked to residue cysteine 24. Cysteine 24 carries the S-diacylglycerol cysteine lipid modification.

The protein belongs to the spiralin family. In terms of assembly, seems to occur as dimer, tetramers, and large oligomers of identical chains. Post-translationally, palmitate and stearate are the major lipid components.

Its subcellular location is the cell membrane. Major membrane protein of spiroplasma. The sequence is that of Spiralin (spi) from Spiroplasma melliferum.